A 360-amino-acid chain; its full sequence is Serine/threonine-protein kinase SRK2H (360 aa).

Residues 4–260 form the Protein kinase domain; the sequence is YEVVKDLGAG…LKEIKKHPWY (257 aa). Residues 10–18 and Lys33 contribute to the ATP site; that span reads LGAGNFGVA. Asp123 functions as the Proton acceptor in the catalytic mechanism. A disordered region spans residues 298-360; the sequence is EARNPAPSSN…AHSCQEPPKA (63 aa). Over residues 313–343 the composition is skewed to acidic residues; the sequence is DDDEEDVEDEVEEEEEEEEEEEEEEEEEEDE. Positions 344-360 are enriched in basic and acidic residues; the sequence is YEKHVKEAHSCQEPPKA.

This sequence belongs to the protein kinase superfamily. Ser/Thr protein kinase family. In terms of tissue distribution, expressed in seedlings.

The enzyme catalyses L-seryl-[protein] + ATP = O-phospho-L-seryl-[protein] + ADP + H(+). It carries out the reaction L-threonyl-[protein] + ATP = O-phospho-L-threonyl-[protein] + ADP + H(+). The protein is Serine/threonine-protein kinase SRK2H (SRK2H) of Arabidopsis thaliana (Mouse-ear cress).